Consider the following 316-residue polypeptide: Transaldolase A (316 aa).

Lysine 131 acts as the Schiff-base intermediate with substrate in catalysis.

It belongs to the transaldolase family. Type 1 subfamily. As to quaternary structure, homodimer.

Its subcellular location is the cytoplasm. It carries out the reaction D-sedoheptulose 7-phosphate + D-glyceraldehyde 3-phosphate = D-erythrose 4-phosphate + beta-D-fructose 6-phosphate. Its pathway is carbohydrate degradation; pentose phosphate pathway; D-glyceraldehyde 3-phosphate and beta-D-fructose 6-phosphate from D-ribose 5-phosphate and D-xylulose 5-phosphate (non-oxidative stage): step 2/3. In terms of biological role, transaldolase is important for the balance of metabolites in the pentose-phosphate pathway. In Shigella flexneri, this protein is Transaldolase A.